The following is a 324-amino-acid chain: Autolytic lysozyme (324 aa).

Residues aspartate 5 and glutamate 91 contribute to the active site. Tandem repeats lie at residues 212–234 (LLKRGLEVDGIEGPETEAAIKDF), 235–254 (QSIMGLTVDGIWGTNTSGAA), 255–277 (QQIFSRPLDGVAYPHYEYATRYI), 278–300 (QYRVGASVDGTFGSGTKAKVAAW), and 301–324 (QSNQGLMADGVVGSATWSKLLDEN). A 5 X 23 AA tandem repeats region spans residues 212 to 324 (LLKRGLEVDG…ATWSKLLDEN (113 aa)).

Belongs to the glycosyl hydrolase 25 family. In terms of assembly, monomer.

The protein resides in the secreted. It localises to the cytoplasm. It carries out the reaction Hydrolysis of (1-&gt;4)-beta-linkages between N-acetylmuramic acid and N-acetyl-D-glucosamine residues in a peptidoglycan and between N-acetyl-D-glucosamine residues in chitodextrins.. The sequence is that of Autolytic lysozyme (lyc) from Clostridium acetobutylicum (strain ATCC 824 / DSM 792 / JCM 1419 / IAM 19013 / LMG 5710 / NBRC 13948 / NRRL B-527 / VKM B-1787 / 2291 / W).